Consider the following 33-residue polypeptide: uncharacterized protein (33 aa).

Over 1–12 (MKENKVQQISHK) the chain is Cytoplasmic. A helical transmembrane segment spans residues 13-33 (LINIVVFVAIVEYAYLFLHFY).

It localises to the cell inner membrane. This is an uncharacterized protein from Escherichia coli (strain K12).